Here is a 488-residue protein sequence, read N- to C-terminus: Ribulose bisphosphate carboxylase large chain (488 aa).

Substrate is bound by residues Asn127 and Thr177. The Proton acceptor role is filled by Lys179. Substrate is bound at residue Lys181. Residues Lys205, Asp207, and Glu208 each coordinate Mg(2+). Lys205 carries the N6-carboxylysine modification. The Proton acceptor role is filled by His297. Positions 298, 330, and 382 each coordinate substrate.

This sequence belongs to the RuBisCO large chain family. Type I subfamily. In terms of assembly, heterohexadecamer of 8 large chains and 8 small chains. Mg(2+) is required as a cofactor.

The protein resides in the plastid. Its subcellular location is the chloroplast. The enzyme catalyses 2 (2R)-3-phosphoglycerate + 2 H(+) = D-ribulose 1,5-bisphosphate + CO2 + H2O. The catalysed reaction is D-ribulose 1,5-bisphosphate + O2 = 2-phosphoglycolate + (2R)-3-phosphoglycerate + 2 H(+). RuBisCO catalyzes two reactions: the carboxylation of D-ribulose 1,5-bisphosphate, the primary event in carbon dioxide fixation, as well as the oxidative fragmentation of the pentose substrate in the photorespiration process. Both reactions occur simultaneously and in competition at the same active site. The protein is Ribulose bisphosphate carboxylase large chain of Porphyridium aerugineum (Red microalga).